Here is a 197-residue protein sequence, read N- to C-terminus: DNA-directed RNA polymerases I, II, and III subunit rpabc1 (197 aa).

This sequence belongs to the archaeal Rpo5/eukaryotic RPB5 RNA polymerase subunit family. Component of the RNA polymerase I (Pol I), RNA polymerase II (Pol II) and RNA polymerase III (Pol III) complexes consisting of at least 13, 12 and 17 subunits, respectively. In RNA Pol II, this subunit is present in 2-fold molar excess over the other subunits.

Its subcellular location is the nucleus. In terms of biological role, DNA-dependent RNA polymerase catalyzes the transcription of DNA into RNA using the four ribonucleoside triphosphates as substrates. Common component of RNA polymerases I, II and III which synthesize ribosomal RNA precursors, mRNA precursors and many functional non-coding RNAs, and small RNAs, such as 5S rRNA and tRNAs, respectively. Pol II is the central component of the basal RNA polymerase II transcription machinery. Pols are composed of mobile elements that move relative to each other. In Pol II, RPB5 is part of the lower jaw surrounding the central large cleft and thought to grab the incoming DNA template. Seems to be the major component in this process. The polypeptide is DNA-directed RNA polymerases I, II, and III subunit rpabc1 (polr2e) (Dictyostelium discoideum (Social amoeba)).